Consider the following 416-residue polypeptide: Lipoprotein-releasing system transmembrane protein LolE (416 aa).

4 helical membrane passes run 21 to 41 (VALI…VLIV), 276 to 296 (IAMV…LIMA), 334 to 354 (LIGI…IQGI), and 379 to 399 (WLDV…ASLY).

The protein belongs to the ABC-4 integral membrane protein family. LolC/E subfamily.

It localises to the cell inner membrane. Its function is as follows. Part of an ATP-dependent transport system LolCDE responsible for the release of lipoproteins targeted to the outer membrane from the inner membrane. Such a release is dependent of the sorting-signal (absence of an Asp at position 2 of the mature lipoprotein) and of LolA. This is Lipoprotein-releasing system transmembrane protein LolE (lolE) from Haemophilus influenzae (strain ATCC 51907 / DSM 11121 / KW20 / Rd).